The chain runs to 393 residues: NAD(P)H-quinone oxidoreductase subunit H, chloroplastic (393 aa).

It belongs to the complex I 49 kDa subunit family. NDH is composed of at least 16 different subunits, 5 of which are encoded in the nucleus.

The protein localises to the plastid. It localises to the chloroplast thylakoid membrane. The enzyme catalyses a plastoquinone + NADH + (n+1) H(+)(in) = a plastoquinol + NAD(+) + n H(+)(out). It carries out the reaction a plastoquinone + NADPH + (n+1) H(+)(in) = a plastoquinol + NADP(+) + n H(+)(out). In terms of biological role, NDH shuttles electrons from NAD(P)H:plastoquinone, via FMN and iron-sulfur (Fe-S) centers, to quinones in the photosynthetic chain and possibly in a chloroplast respiratory chain. The immediate electron acceptor for the enzyme in this species is believed to be plastoquinone. Couples the redox reaction to proton translocation, and thus conserves the redox energy in a proton gradient. The polypeptide is NAD(P)H-quinone oxidoreductase subunit H, chloroplastic (Nicotiana sylvestris (Wood tobacco)).